A 312-amino-acid chain; its full sequence is Methionyl-tRNA formyltransferase (312 aa).

Residue 117 to 120 (SLLP) participates in (6S)-5,6,7,8-tetrahydrofolate binding.

Belongs to the Fmt family.

The catalysed reaction is L-methionyl-tRNA(fMet) + (6R)-10-formyltetrahydrofolate = N-formyl-L-methionyl-tRNA(fMet) + (6S)-5,6,7,8-tetrahydrofolate + H(+). Attaches a formyl group to the free amino group of methionyl-tRNA(fMet). The formyl group appears to play a dual role in the initiator identity of N-formylmethionyl-tRNA by promoting its recognition by IF2 and preventing the misappropriation of this tRNA by the elongation apparatus. The chain is Methionyl-tRNA formyltransferase from Bordetella pertussis (strain Tohama I / ATCC BAA-589 / NCTC 13251).